Consider the following 463-residue polypeptide: Argininosuccinate lyase (463 aa).

It belongs to the lyase 1 family. Argininosuccinate lyase subfamily.

It is found in the cytoplasm. The catalysed reaction is 2-(N(omega)-L-arginino)succinate = fumarate + L-arginine. It participates in amino-acid biosynthesis; L-arginine biosynthesis; L-arginine from L-ornithine and carbamoyl phosphate: step 3/3. The chain is Argininosuccinate lyase from Streptococcus pneumoniae serotype 2 (strain D39 / NCTC 7466).